The primary structure comprises 153 residues: Troponin C (153 aa).

A1 is subject to Blocked amino end (Ala). 4 consecutive EF-hand domains span residues 10–45 (EQVQ…LGQT), 46–81 (FEEK…FLVE), 86–121 (AMQE…LDDK), and 122–153 (LTED…MMTG). D59, D61, S63, E65, E70, D99, D110, D135, D137, S139, T141, and E146 together coordinate Ca(2+).

It belongs to the troponin C family.

In terms of biological role, troponin is the central regulatory protein of striated muscle contraction. Tn consists of three components: Tn-I which is the inhibitor of actomyosin ATPase, Tn-T which contains the binding site for tropomyosin and Tn-C. The binding of calcium to Tn-C abolishes the inhibitory action of Tn on actin filaments. The polypeptide is Troponin C (Tachypleus tridentatus (Japanese horseshoe crab)).